Consider the following 999-residue polypeptide: Hypoxia up-regulated protein 1 (999 aa).

The N-terminal stretch at 1–32 (MADKVRRQRPRRRVCWALVAVLLADLLALSDT) is a signal peptide. N-linked (GlcNAc...) asparagine glycosylation is found at asparagine 155, asparagine 222, and asparagine 515. Phosphoserine is present on serine 567. Residues 578–694 (GNTISSLFGG…KKQKPARKRR (117 aa)) form a disordered region. The N-linked (GlcNAc...) asparagine glycan is linked to asparagine 596. Composition is skewed to basic and acidic residues over residues 611–626 (GSKDEPGEQVELKEEA) and 641–672 (PKGDATPEGEKATEKENGDKSEAQKPSEKAEA). 3 N-linked (GlcNAc...) asparagine glycosylation sites follow: asparagine 830, asparagine 862, and asparagine 869. The residue at position 883 (lysine 883) is an N6-acetyllysine. Residues 909 to 999 (AKFTKPRPRP…QKRPLKNDEL (91 aa)) form a disordered region. N-linked (GlcNAc...) asparagine glycans are attached at residues asparagine 922 and asparagine 931. A Prevents secretion from ER motif is present at residues 996–999 (NDEL).

It belongs to the heat shock protein 70 family. Part of a large chaperone multiprotein complex comprising DNAJB11, HSP90B1, HSPA5, HYOU, PDIA2, PDIA4, PDIA6, PPIB, SDF2L1, UGGT1 and very small amounts of ERP29, but not, or at very low levels, CALR nor CANX. Highly expressed in tissues that contain well-developed endoplasmic reticulum and synthesize large amounts of secretory proteins. Highly expressed in liver and pancreas and lower expression in brain and kidney. Also expressed in macrophages within aortic atherosclerotic plaques, and in breast cancers.

It localises to the endoplasmic reticulum lumen. Its function is as follows. Has a pivotal role in cytoprotective cellular mechanisms triggered by oxygen deprivation. Promotes HSPA5/BiP-mediated ATP nucleotide exchange and thereby activates the unfolded protein response (UPR) pathway in the presence of endoplasmic reticulum stress. May play a role as a molecular chaperone and participate in protein folding. The chain is Hypoxia up-regulated protein 1 (HYOU1) from Homo sapiens (Human).